We begin with the raw amino-acid sequence, 402 residues long: CCA-adding enzyme (402 aa).

Positions 32 and 35 each coordinate ATP. 2 residues coordinate CTP: Gly32 and Arg35. Mg(2+) is bound by residues Asp45 and Asp47. The ATP site is built by Arg116, Asp159, Arg162, Arg165, and Arg168. Positions 116, 159, 162, 165, and 168 each coordinate CTP.

Belongs to the tRNA nucleotidyltransferase/poly(A) polymerase family. Bacterial CCA-adding enzyme type 3 subfamily. Homodimer. Requires Mg(2+) as cofactor.

The enzyme catalyses a tRNA precursor + 2 CTP + ATP = a tRNA with a 3' CCA end + 3 diphosphate. The catalysed reaction is a tRNA with a 3' CCA end + 2 CTP + ATP = a tRNA with a 3' CCACCA end + 3 diphosphate. Catalyzes the addition and repair of the essential 3'-terminal CCA sequence in tRNAs without using a nucleic acid template. Adds these three nucleotides in the order of C, C, and A to the tRNA nucleotide-73, using CTP and ATP as substrates and producing inorganic pyrophosphate. tRNA 3'-terminal CCA addition is required both for tRNA processing and repair. Also involved in tRNA surveillance by mediating tandem CCA addition to generate a CCACCA at the 3' terminus of unstable tRNAs. While stable tRNAs receive only 3'-terminal CCA, unstable tRNAs are marked with CCACCA and rapidly degraded. This Streptococcus agalactiae serotype III (strain NEM316) protein is CCA-adding enzyme.